We begin with the raw amino-acid sequence, 360 residues long: Probable neutral protease 2 homolog A (360 aa).

An N-terminal signal peptide occupies residues 1-17 (MQFTALLAALGAPLALA). The propeptide occupies 18 to 183 (ASIPAAAHNH…DDSTGVIDKR (166 aa)). Intrachain disulfides connect C191–C262, C269–C287, and C300–C360. N-linked (GlcNAc...) asparagine glycosylation is present at N205. H311 is a Zn(2+) binding site. The active site involves E312. Zn(2+) contacts are provided by H315 and D326.

It belongs to the peptidase M35 family. Zn(2+) serves as cofactor.

The protein resides in the secreted. It catalyses the reaction Preferential cleavage of bonds with hydrophobic residues in P1'. Also 3-Asn-|-Gln-4 and 8-Gly-|-Ser-9 bonds in insulin B chain.. Its function is as follows. Probable secreted metalloprotease that shows high activities on basic nuclear substrates such as histone and protamine. May be involved in virulence. This is Probable neutral protease 2 homolog A (NpII-A) from Trichophyton rubrum (Athlete's foot fungus).